Consider the following 59-residue polypeptide: UPF0391 membrane protein lpl2443 (59 aa).

2 helical membrane passes run 5–25 and 30–50; these read ALIF…GIAV and IAKI…IMGL.

The protein belongs to the UPF0391 family.

The protein resides in the cell membrane. This chain is UPF0391 membrane protein lpl2443, found in Legionella pneumophila (strain Lens).